The sequence spans 137 residues: ATP synthase epsilon chain (137 aa).

The protein belongs to the ATPase epsilon chain family. In terms of assembly, F-type ATPases have 2 components, CF(1) - the catalytic core - and CF(0) - the membrane proton channel. CF(1) has five subunits: alpha(3), beta(3), gamma(1), delta(1), epsilon(1). CF(0) has three main subunits: a, b and c.

It localises to the cell membrane. In terms of biological role, produces ATP from ADP in the presence of a proton gradient across the membrane. This chain is ATP synthase epsilon chain, found in Streptococcus agalactiae serotype III (strain NEM316).